The following is a 299-amino-acid chain: Proline iminopeptidase (299 aa).

Positions 29–279 (PLLLLHGGPG…SRHMAFIDEP (251 aa)) constitute an AB hydrolase-1 domain. The active-site Nucleophile is Ser105. Asp245 is a catalytic residue. His272 serves as the catalytic Proton donor.

It belongs to the peptidase S33 family.

The protein resides in the cell envelope. It carries out the reaction Release of N-terminal proline from a peptide.. In terms of biological role, releases the N-terminal proline from various substrates. The protein is Proline iminopeptidase of Levilactobacillus brevis (strain ATCC 367 / BCRC 12310 / CIP 105137 / JCM 1170 / LMG 11437 / NCIMB 947 / NCTC 947) (Lactobacillus brevis).